Consider the following 365-residue polypeptide: Serine/threonine-protein kinase SAPK6 (365 aa).

Residues 4 to 260 (YELLKDIGSG…IREIRNHPWF (257 aa)) form the Protein kinase domain. Residues 10–18 (IGSGNFGVA) and K33 each bind ATP. Residue D123 is the Proton acceptor of the active site. A disordered region spans residues 298-365 (VQEAKTPPPS…AHASCDLQKS (68 aa)). Residues 317-347 (TEEEEQEDGKNPDDDEGDRDEEEGEEGDSED) show a composition bias toward acidic residues.

It belongs to the protein kinase superfamily. Ser/Thr protein kinase family. As to quaternary structure, interacts with BZIP46. May be phosphorylated. In terms of tissue distribution, expressed in leaf blades and leaf sheaths. Expressed in shoots and roots of young seedlings.

The enzyme catalyses L-seryl-[protein] + ATP = O-phospho-L-seryl-[protein] + ADP + H(+). The catalysed reaction is L-threonyl-[protein] + ATP = O-phospho-L-threonyl-[protein] + ADP + H(+). Activated by hyperosmotic stress. Functionally, may play a role in signal transduction of hyperosmotic response. Can phosphorylate ABI5 in vitro. Can phosphorylate BZIP46 in vitro. This Oryza sativa subsp. japonica (Rice) protein is Serine/threonine-protein kinase SAPK6.